The sequence spans 293 residues: Elongation factor Ts (293 aa).

Positions 80–83 (TDFV) are involved in Mg(2+) ion dislocation from EF-Tu.

This sequence belongs to the EF-Ts family.

It is found in the cytoplasm. In terms of biological role, associates with the EF-Tu.GDP complex and induces the exchange of GDP to GTP. It remains bound to the aminoacyl-tRNA.EF-Tu.GTP complex up to the GTP hydrolysis stage on the ribosome. The protein is Elongation factor Ts of Paraburkholderia xenovorans (strain LB400).